The chain runs to 580 residues: High affinity choline transporter 1 (580 aa).

Residues 1–6 (MSFHVE) are Extracellular-facing. A helical transmembrane segment spans residues 7-27 (GLVAIILFYLLIFLVGIWAAW). Residues 28–48 (KTKNSGNPEERSEAIIVGGRD) are Cytoplasmic-facing. A helical transmembrane segment spans residues 49–69 (IGLLVGGFTMTATWVGGGYIN). The Extracellular segment spans residues 70–81 (GTAEAVYGPGCG). Residues 82 to 102 (LAWAQAPIGYSLSLILGGLFF) traverse the membrane as a helical segment. Topologically, residues 103–125 (AKPMRSKGYVTMLDPFQQIYGKR) are cytoplasmic. Residues 126–146 (MGGLLFIPALMGEMFWAAAIF) traverse the membrane as a helical segment. Residues 147–164 (SALGATISVIIDVDVNIS) lie on the Extracellular side of the membrane. Residues 165–185 (VIVSALIAILYTLVGGLYSVA) form a helical membrane-spanning segment. At 186-191 (YTDVVQ) the chain is on the cytoplasmic side. Residues 192–212 (LFCIFIGLWISVPFALSHPAV) traverse the membrane as a helical segment. The Extracellular segment spans residues 213 to 237 (TDIGFTAVHAKYQSPWLGTIESVEV). The helical transmembrane segment at 238 to 258 (YTWLDNFLLLMLGGIPWQAYF) threads the bilayer. Residues 259-274 (QRVLSSSSATYAQVLS) lie on the Cytoplasmic side of the membrane. The chain crosses the membrane as a helical span at residues 275–295 (FLAAFGCLVMALPAICIGAIG). The Extracellular portion of the chain corresponds to 296–317 (ASTDWNQTAYGYPDPKTKEEAD). Residue asparagine 301 is glycosylated (N-linked (GlcNAc...) asparagine). Residues 318–338 (MILPIVLQYLCPVYISFFGLG) form a helical membrane-spanning segment. Residues 339–376 (AVSAAVMSSADSSILSASSMFARNIYQLSFRQNASDKE) are Cytoplasmic-facing. The helical transmembrane segment at 377-397 (IVWVMRITVLVFGASATAMAL) threads the bilayer. Residues 398–406 (LTKTVYGLW) lie on the Extracellular side of the membrane. The helical transmembrane segment at 407–427 (YLSSDLVYIIIFPQLLCVLFI) threads the bilayer. Residues 428-435 (KGTNTYGA) are Cytoplasmic-facing. Residues 436-456 (VAGYIFGLFLRITGGEPYLYL) form a helical membrane-spanning segment. At 457 to 481 (QPLIFYPGYYSDKNGIYNQRFPFKT) the chain is on the extracellular side. A helical membrane pass occupies residues 482 to 502 (LSMVTSFFTNICVSYLAKYLF). A mediates interaction with SEC14L1 region spans residues 502 to 580 (FESGTLPPKL…EGSGTEDNLQ (79 aa)). The Cytoplasmic segment spans residues 503-580 (ESGTLPPKLD…EGSGTEDNLQ (78 aa)). The Dileucine-like motif signature appears at 527–532 (DKTILV).

Belongs to the sodium:solute symporter (SSF) (TC 2.A.21) family. As to quaternary structure, homooligomerizes at cell surface. Interacts with SEC14L1; may regulate SLC5A7. Phosphorylated by PKC and dephosphorylated by PP1/PP2A. In terms of tissue distribution, found in spinal cord, brain-stem, mid-brain and striatum. Specific for cholinergic neurons.

It localises to the presynaptic cell membrane. It is found in the cell projection. The protein localises to the axon. The protein resides in the early endosome membrane. Its subcellular location is the cytoplasmic vesicle. It localises to the secretory vesicle. It is found in the synaptic vesicle membrane. It catalyses the reaction choline(out) + n Na(+)(out) = choline(in) + n Na(+)(in). Its activity is regulated as follows. Choline uptake activity is regulated by SLC5A7/CHT1 internalization (inactive form) from the cell surface and recycling of internalized SLC5A7/CHT1 into the cell surface (active form). Activated by extracellular chloride ion. Specifically inhibited by nanomolar concentrations of hemicholinium 3. In terms of biological role, high-affinity Na(+)-coupled choline transmembrane symporter. Functions as an electrogenic, voltage-dependent transporter with variable charge/choline stoichiometry. Choline uptake and choline-induced current is also Cl(-)-dependent where Cl(-) is likely a regulatory ion rather than cotransported ion. Plays a critical role in acetylcholine (ACh) synthesis by taking up the substrate choline from the synaptic cleft into the presynaptic nerve terminals after neurotransmitter release. SLC5A7/CHT1-mediated choline high-affinity transport in cholinergic neurons is the rate-limiting step for production of ACh, thereby facilitating communication by subsequent action potentials. Localized predominantly in presynaptic terminal intracellular organelles, and translocated to the plasma membrane in active form in response to neuronal activity. This Mus musculus (Mouse) protein is High affinity choline transporter 1.